A 138-amino-acid chain; its full sequence is Small ribosomal subunit protein uS11c (138 aa).

The disordered stretch occupies residues 1–23 (MAKPIPRIGSRKNGRIGSRKSGR). Residues 9 to 23 (GSRKNGRIGSRKSGR) show a composition bias toward basic residues.

Belongs to the universal ribosomal protein uS11 family. In terms of assembly, part of the 30S ribosomal subunit.

It is found in the plastid. The protein localises to the chloroplast. In Buxus microphylla (Littleleaf boxwood), this protein is Small ribosomal subunit protein uS11c.